The chain runs to 296 residues: 2-dehydropantoate 2-reductase (296 aa).

NADP(+)-binding positions include 7–12, N94, and A120; that span reads GPGAVG. N94 contributes to the substrate binding site. Residue K175 is the Proton donor of the active site. Positions 179, 183, 193, and 245 each coordinate substrate. Residue E257 coordinates NADP(+).

Belongs to the ketopantoate reductase family.

It localises to the cytoplasm. The enzyme catalyses (R)-pantoate + NADP(+) = 2-dehydropantoate + NADPH + H(+). The protein operates within cofactor biosynthesis; (R)-pantothenate biosynthesis; (R)-pantoate from 3-methyl-2-oxobutanoate: step 2/2. In terms of biological role, catalyzes the NADPH-dependent reduction of ketopantoate into pantoic acid. The chain is 2-dehydropantoate 2-reductase (panE) from Vibrio cholerae serotype O1 (strain ATCC 39315 / El Tor Inaba N16961).